We begin with the raw amino-acid sequence, 161 residues long: Protein UXT homolog (161 aa).

Belongs to the UXT family.

In Dictyostelium discoideum (Social amoeba), this protein is Protein UXT homolog.